A 588-amino-acid polypeptide reads, in one-letter code: Protein decapentaplegic (588 aa).

The first 23 residues, 1–23 (MRAWLLLLAVLATFQTIVRVAST), serve as a signal peptide directing secretion. Positions 24–456 (EDISQRFIAA…DGRHKARSIR (433 aa)) are excised as a propeptide. Residues 74-169 (FSEPASFSDS…STESHQSSSI (96 aa)) are disordered. Residues 96–119 (SKSDANRQFNEVHKPRTDQLENSK) are compositionally biased toward basic and acidic residues. N-linked (GlcNAc...) asparagine glycosylation is present at Asn120. Over residues 140 to 153 (RSHHKKSHHHRSHQ) the composition is skewed to basic residues. Low complexity predominate over residues 156–169 (QASASTESHQSSSI). N-linked (GlcNAc...) asparagine glycans are attached at residues Asn342 and Asn377. The interval 454–484 (SIRDVSGGEGGGKGGRNKRQPRRPTRRKNHD) is disordered. The span at 468–481 (GRNKRQPRRPTRRK) shows a compositional bias: basic residues. 3 disulfide bridges follow: Cys487/Cys553, Cys516/Cys585, and Cys520/Cys587. An N-linked (GlcNAc...) asparagine glycan is attached at Asn529.

The protein belongs to the TGF-beta family. In terms of assembly, heterodimers of scw/dpp are the active subunit, dpp/dpp homodimers elicit a basal response and scw/scw homodimers alone are ineffective in specifying a dorsal pattern. Component of a complex composed of dpp, sog and tsg. Interacts with nord and gbb; the interaction interferes with dpp secretion. Expressed in the dorsal region of the embryo, and becomes enriched in a dorsal midline stripe just prior to gastrulation. Expressed in midgut mesoderm and in two overlapping regions of the embryonic large intestine. Expressed in a long-range concentration gradient in the wing imaginal disk.

It is found in the secreted. Required during oogenesis for eggshell patterning and dorsal/ventral patterning of the embryo. Acts as a morphogen during embryogenesis to pattern the dorsal/ventral axis, specifying dorsal ectoderm and amnioserosa cell fate within the dorsal half of the embryo; this activity is antagonized by binding to sog and tsg. Induces the formation of visceral mesoderm and the heart in early embryos. Required later in embryogenesis for dorsal closure and patterning of the hindgut. Also functions postembryonically as a long-range morphogen during imaginal disk development; is responsible for the progression of the morphogenetic furrow during eye development. Patterns the wing imaginal disk along its anterior/posterior axis and has a role in positioning pro-veins. Also required to subdivide the wing disk along the proximal/distal axis into body wall (notum) and wing. Ensures the correct architecture of wing epithelial cells. Has multiple roles in the developing tracheal system, controlling directed tracheal cell migration during embryogenesis and later specifying the fate of fusion cells in the tracheal branches. Required for viability of larvae. Essential for the maintenance and division of germline stem cells in the ovary. Signals via the type I receptor tkv, the type II receptor punt, and in some tissues via the type I receptor sax, in a signaling cascade that leads to activation and repression of target genes. The polypeptide is Protein decapentaplegic (dpp) (Drosophila melanogaster (Fruit fly)).